The primary structure comprises 55 residues: Large ribosomal subunit protein bL33 (55 aa).

This sequence belongs to the bacterial ribosomal protein bL33 family.

In Arthrobacter sp. (strain FB24), this protein is Large ribosomal subunit protein bL33.